The primary structure comprises 466 residues: Soluble pyridine nucleotide transhydrogenase (466 aa).

36–45 (EKESSVGGGC) contributes to the FAD binding site.

This sequence belongs to the class-I pyridine nucleotide-disulfide oxidoreductase family. FAD serves as cofactor.

The protein resides in the cytoplasm. It carries out the reaction NAD(+) + NADPH = NADH + NADP(+). In terms of biological role, conversion of NADPH, generated by peripheral catabolic pathways, to NADH, which can enter the respiratory chain for energy generation. In Vibrio parahaemolyticus serotype O3:K6 (strain RIMD 2210633), this protein is Soluble pyridine nucleotide transhydrogenase.